The primary structure comprises 167 residues: Large ribosomal subunit protein uL10 (167 aa).

The protein belongs to the universal ribosomal protein uL10 family. Part of the ribosomal stalk of the 50S ribosomal subunit. The N-terminus interacts with L11 and the large rRNA to form the base of the stalk. The C-terminus forms an elongated spine to which L12 dimers bind in a sequential fashion forming a multimeric L10(L12)X complex.

Functionally, forms part of the ribosomal stalk, playing a central role in the interaction of the ribosome with GTP-bound translation factors. This chain is Large ribosomal subunit protein uL10, found in Cytophaga hutchinsonii (strain ATCC 33406 / DSM 1761 / CIP 103989 / NBRC 15051 / NCIMB 9469 / D465).